Reading from the N-terminus, the 171-residue chain is GTP-dependent dephospho-CoA kinase (171 aa).

GTP-binding residues include D49, V51, D68, and E122.

It belongs to the GTP-dependent DPCK family.

The catalysed reaction is 3'-dephospho-CoA + GTP = GDP + CoA + H(+). It functions in the pathway cofactor biosynthesis; coenzyme A biosynthesis. Catalyzes the GTP-dependent phosphorylation of the 3'-hydroxyl group of dephosphocoenzyme A to form coenzyme A (CoA). The sequence is that of GTP-dependent dephospho-CoA kinase from Hyperthermus butylicus (strain DSM 5456 / JCM 9403 / PLM1-5).